Consider the following 592-residue polypeptide: Threonine dehydratase biosynthetic, chloroplastic (592 aa).

Residues 1-91 constitute a chloroplast transit peptide; sequence MNSVQLPTAQ…NEAENGSIAE (91 aa). K141 is subject to N6-(pyridoxal phosphate)lysine. ACT-like domains lie at 419-490 and 512-583; these read AVLA…NLTT and VLCR…LVSD.

It belongs to the serine/threonine dehydratase family. Requires pyridoxal 5'-phosphate as cofactor.

The protein resides in the plastid. It localises to the chloroplast. The enzyme catalyses L-threonine = 2-oxobutanoate + NH4(+). It functions in the pathway amino-acid biosynthesis; L-isoleucine biosynthesis; 2-oxobutanoate from L-threonine: step 1/1. With respect to regulation, allosterically inhibited by isoleucine. Strain GM11b is isoleucine feedback insensitive and is resistant to the antimetabolite L-O-methylthreonine. Catalyzes the formation of alpha-ketobutyrate from threonine in a two-step reaction. The first step is a dehydration of threonine, followed by rehydration and liberation of ammonia. This Arabidopsis thaliana (Mouse-ear cress) protein is Threonine dehydratase biosynthetic, chloroplastic (OMR1).